A 63-amino-acid polypeptide reads, in one-letter code: MKAKELREKSIEELNTELLNLLREQFNLRMQAASGQLQQSHLLKQVRRDVARVKTLLNEKAGA.

The protein belongs to the universal ribosomal protein uL29 family.

The chain is Large ribosomal subunit protein uL29 from Shigella flexneri.